We begin with the raw amino-acid sequence, 186 residues long: Threonylcarbamoyl-AMP synthase (186 aa).

Residues 6–186 (GFRLRLAANA…FDAMSGRRIR (181 aa)) form the YrdC-like domain.

The protein belongs to the SUA5 family. TsaC subfamily.

It is found in the cytoplasm. The enzyme catalyses L-threonine + hydrogencarbonate + ATP = L-threonylcarbamoyladenylate + diphosphate + H2O. Functionally, required for the formation of a threonylcarbamoyl group on adenosine at position 37 (t(6)A37) in tRNAs that read codons beginning with adenine. Catalyzes the conversion of L-threonine, HCO(3)(-)/CO(2) and ATP to give threonylcarbamoyl-AMP (TC-AMP) as the acyladenylate intermediate, with the release of diphosphate. The protein is Threonylcarbamoyl-AMP synthase of Methylococcus capsulatus (strain ATCC 33009 / NCIMB 11132 / Bath).